The following is a 627-amino-acid chain: DNA-directed RNA polymerase subunit gamma (627 aa).

Zn(2+) contacts are provided by Cys70, Cys72, Cys85, and Cys88. 3 residues coordinate Mg(2+): Asp468, Asp470, and Asp472.

The protein belongs to the RNA polymerase beta' chain family. RpoC1 subfamily. As to quaternary structure, in cyanobacteria the RNAP catalytic core is composed of 2 alpha, 1 beta, 1 beta', 1 gamma and 1 omega subunit. When a sigma factor is associated with the core the holoenzyme is formed, which can initiate transcription. The cofactor is Mg(2+). Requires Zn(2+) as cofactor.

The enzyme catalyses RNA(n) + a ribonucleoside 5'-triphosphate = RNA(n+1) + diphosphate. Functionally, DNA-dependent RNA polymerase catalyzes the transcription of DNA into RNA using the four ribonucleoside triphosphates as substrates. This Synechococcus sp. (strain JA-3-3Ab) (Cyanobacteria bacterium Yellowstone A-Prime) protein is DNA-directed RNA polymerase subunit gamma.